A 902-amino-acid polypeptide reads, in one-letter code: Magnesium-transporting ATPase, P-type 1 (902 aa).

The Cytoplasmic portion of the chain corresponds to 1-98; sequence MLKIITRQLF…KPSPWWVHLW (98 aa). Residues 99–119 traverse the membrane as a helical segment; sequence VCYRNPFNILLTILGGISYAT. Glutamate 120 is a topological domain (extracellular). A helical transmembrane segment spans residues 121–141; the sequence is DLFAAGVIALMVGISTLLNFV. Residues 142–291 are Cytoplasmic-facing; the sequence is QEARSTKAAD…QNAFQKGISR (150 aa). A helical membrane pass occupies residues 292–312; sequence VSMLLIRFMLVMAPVVLIING. Residues 313 to 321 are Extracellular-facing; sequence YTKGDWWEA. A helical transmembrane segment spans residues 322–339; it reads ALFALSVAVGLTPEMLPM. Position 335 (glutamate 335) interacts with Mg(2+). Topologically, residues 340 to 699 are cytoplasmic; it reads IVTSTLARGA…IEGRRTFSNM (360 aa). The active-site 4-aspartylphosphate intermediate is aspartate 377. Mg(2+) is bound by residues aspartate 645, aspartate 649, and asparagine 713. The chain crosses the membrane as a helical span at residues 700–719; sequence LKYIKMTASSNFGNVFSVLV. At 720–728 the chain is on the extracellular side; that stretch reads ASAFLPFLP. Residues 729–748 form a helical membrane-spanning segment; that stretch reads MLPLHLLIQNLLYDVSQVAI. Asparagine 738 and aspartate 742 together coordinate Mg(2+). Over 749-770 the chain is Cytoplasmic; it reads PFDNVDEEQIQKPQRWNPADLG. Residues 771 to 794 form a helical membrane-spanning segment; it reads RFMVFFGPISSIFDILTFCLMWWV. The Extracellular portion of the chain corresponds to 795 to 803; sequence FHANTPETQ. Residues 804–822 form a helical membrane-spanning segment; sequence TLFQSGWFVVGLLSQTLIV. Residues 823-835 lie on the Cytoplasmic side of the membrane; the sequence is HMIRTRRLPFIQS. The helical transmembrane segment at 836–855 threads the bilayer; it reads RAAWPLMAMTLLVMVVGVSL. Residues 856–870 lie on the Extracellular side of the membrane; the sequence is PFSPLASYLQLQALP. A helical transmembrane segment spans residues 871-890; sequence LSYFPWLIAILVGYMTLTQL. Over 891 to 902 the chain is Cytoplasmic; sequence VKGFYSRRYGWQ.

This sequence belongs to the cation transport ATPase (P-type) (TC 3.A.3) family. Type IIIB subfamily.

It is found in the cell inner membrane. It catalyses the reaction Mg(2+)(out) + ATP + H2O = Mg(2+)(in) + ADP + phosphate + H(+). Its function is as follows. Mediates magnesium influx to the cytosol. The sequence is that of Magnesium-transporting ATPase, P-type 1 (mgtA) from Salmonella typhimurium (strain 14028s / SGSC 2262).